We begin with the raw amino-acid sequence, 357 residues long: DNA polymerase IV (357 aa).

The UmuC domain occupies 4–185; it reads IIHCDCDCFY…LPVERLFGVG (182 aa). The Mg(2+) site is built by D8 and D103. E104 is an active-site residue.

It belongs to the DNA polymerase type-Y family. As to quaternary structure, monomer. It depends on Mg(2+) as a cofactor.

The protein resides in the cytoplasm. It catalyses the reaction DNA(n) + a 2'-deoxyribonucleoside 5'-triphosphate = DNA(n+1) + diphosphate. Its function is as follows. Poorly processive, error-prone DNA polymerase involved in untargeted mutagenesis. Copies undamaged DNA at stalled replication forks, which arise in vivo from mismatched or misaligned primer ends. These misaligned primers can be extended by PolIV. Exhibits no 3'-5' exonuclease (proofreading) activity. May be involved in translesional synthesis, in conjunction with the beta clamp from PolIII. In Ralstonia nicotianae (strain ATCC BAA-1114 / GMI1000) (Ralstonia solanacearum), this protein is DNA polymerase IV.